Here is a 181-residue protein sequence, read N- to C-terminus: Trans-acting factor D (181 aa).

Plays a role in 2-micron plasmid partitioning. Antagonizes transcriptional repression of recombinase FLP by REP1-REP2. Regulates both stability and copy number of the plasmid by blocking the formation of the REP1-REP2 repressor complex. This chain is Trans-acting factor D, found in Saccharomyces cerevisiae (strain ATCC 204508 / S288c) (Baker's yeast).